We begin with the raw amino-acid sequence, 264 residues long: [LysW]-aminoadipate/[LysW]-glutamate kinase (264 aa).

Residues 35-36 (GG), arginine 62, and asparagine 167 contribute to the substrate site.

The protein belongs to the acetylglutamate kinase family. LysZ subfamily.

It localises to the cytoplasm. The catalysed reaction is [amino-group carrier protein]-C-terminal-N-(1,4-dicarboxybutan-1-yl)-L-glutamine + ATP = [amino-group carrier protein]-C-terminal-N-(1-carboxy-5-phosphooxy-5-oxopentan-1-yl)-L-glutamine + ADP. It catalyses the reaction [amino-group carrier protein]-C-terminal-gamma-(L-glutamyl)-L-glutamate + ATP = [amino-group carrier protein]-C-terminal-gamma-(5-phospho-L-glutamyl)-L-glutamate + ADP. Its pathway is amino-acid biosynthesis; L-lysine biosynthesis via AAA pathway; L-lysine from L-alpha-aminoadipate (Thermus route): step 2/5. The protein operates within amino-acid biosynthesis; L-arginine biosynthesis. In terms of biological role, involved in both the arginine and lysine biosynthetic pathways. Phosphorylates the LysW-bound precursors glutamate (for arginine biosynthesis), respectively alpha-aminoadipate (for lysine biosynthesis). This is [LysW]-aminoadipate/[LysW]-glutamate kinase from Saccharolobus islandicus (strain L.S.2.15 / Lassen #1) (Sulfolobus islandicus).